A 91-amino-acid chain; its full sequence is Small ribosomal subunit protein uS19 (91 aa).

This sequence belongs to the universal ribosomal protein uS19 family.

Protein S19 forms a complex with S13 that binds strongly to the 16S ribosomal RNA. In Cupriavidus taiwanensis (strain DSM 17343 / BCRC 17206 / CCUG 44338 / CIP 107171 / LMG 19424 / R1) (Ralstonia taiwanensis (strain LMG 19424)), this protein is Small ribosomal subunit protein uS19.